The primary structure comprises 223 residues: Enolase-phosphatase E1 (223 aa).

This sequence belongs to the HAD-like hydrolase superfamily. MasA/MtnC family. Monomer. Mg(2+) serves as cofactor.

It carries out the reaction 5-methylsulfanyl-2,3-dioxopentyl phosphate + H2O = 1,2-dihydroxy-5-(methylsulfanyl)pent-1-en-3-one + phosphate. It functions in the pathway amino-acid biosynthesis; L-methionine biosynthesis via salvage pathway; L-methionine from S-methyl-5-thio-alpha-D-ribose 1-phosphate: step 3/6. Its pathway is amino-acid biosynthesis; L-methionine biosynthesis via salvage pathway; L-methionine from S-methyl-5-thio-alpha-D-ribose 1-phosphate: step 4/6. In terms of biological role, bifunctional enzyme that catalyzes the enolization of 2,3-diketo-5-methylthiopentyl-1-phosphate (DK-MTP-1-P) into the intermediate 2-hydroxy-3-keto-5-methylthiopentenyl-1-phosphate (HK-MTPenyl-1-P), which is then dephosphorylated to form the acireductone 1,2-dihydroxy-3-keto-5-methylthiopentene (DHK-MTPene). This is Enolase-phosphatase E1 from Aquifex aeolicus (strain VF5).